The primary structure comprises 444 residues: UDP-N-acetylglucosamine 1-carboxyvinyltransferase (444 aa).

Position 22–23 (Lys22–Asn23) interacts with phosphoenolpyruvate. Arg94 contacts UDP-N-acetyl-alpha-D-glucosamine. Asp119 serves as the catalytic Proton donor. UDP-N-acetyl-alpha-D-glucosamine contacts are provided by Asp309 and Val331.

The protein belongs to the EPSP synthase family. MurA subfamily.

The protein resides in the cytoplasm. The catalysed reaction is phosphoenolpyruvate + UDP-N-acetyl-alpha-D-glucosamine = UDP-N-acetyl-3-O-(1-carboxyvinyl)-alpha-D-glucosamine + phosphate. The protein operates within cell wall biogenesis; peptidoglycan biosynthesis. Functionally, cell wall formation. Adds enolpyruvyl to UDP-N-acetylglucosamine. This Chlamydia trachomatis serovar A (strain ATCC VR-571B / DSM 19440 / HAR-13) protein is UDP-N-acetylglucosamine 1-carboxyvinyltransferase.